A 103-amino-acid polypeptide reads, in one-letter code: UPF0145 protein BC_1816 (103 aa).

The protein belongs to the UPF0145 family.

The sequence is that of UPF0145 protein BC_1816 from Bacillus cereus (strain ATCC 14579 / DSM 31 / CCUG 7414 / JCM 2152 / NBRC 15305 / NCIMB 9373 / NCTC 2599 / NRRL B-3711).